We begin with the raw amino-acid sequence, 188 residues long: dCTP deaminase (188 aa).

DCTP-binding positions include 111–116 (KSTYAR), 135–137 (TLE), Q156, Y170, and Q180. E137 (proton donor/acceptor) is an active-site residue.

Belongs to the dCTP deaminase family. In terms of assembly, homotrimer.

The catalysed reaction is dCTP + H2O + H(+) = dUTP + NH4(+). It functions in the pathway pyrimidine metabolism; dUMP biosynthesis; dUMP from dCTP (dUTP route): step 1/2. Catalyzes the deamination of dCTP to dUTP. In Cupriavidus pinatubonensis (strain JMP 134 / LMG 1197) (Cupriavidus necator (strain JMP 134)), this protein is dCTP deaminase.